The chain runs to 226 residues: Ribose-5-phosphate isomerase A (226 aa).

Residues 26–29 (TGST), 82–85 (DGAD), and 95–98 (KGGG) each bind substrate. Catalysis depends on Glu104, which acts as the Proton acceptor. Residue Lys122 coordinates substrate.

The protein belongs to the ribose 5-phosphate isomerase family. In terms of assembly, homodimer.

The enzyme catalyses aldehydo-D-ribose 5-phosphate = D-ribulose 5-phosphate. It functions in the pathway carbohydrate degradation; pentose phosphate pathway; D-ribose 5-phosphate from D-ribulose 5-phosphate (non-oxidative stage): step 1/1. In terms of biological role, catalyzes the reversible conversion of ribose-5-phosphate to ribulose 5-phosphate. This Streptococcus uberis (strain ATCC BAA-854 / 0140J) protein is Ribose-5-phosphate isomerase A.